The sequence spans 246 residues: Probable transcriptional regulatory protein CLJ_B3338 (246 aa).

The protein belongs to the TACO1 family.

The protein resides in the cytoplasm. The chain is Probable transcriptional regulatory protein CLJ_B3338 from Clostridium botulinum (strain 657 / Type Ba4).